A 166-amino-acid polypeptide reads, in one-letter code: PTS system glucose-specific EIIA component (166 aa).

The PTS EIIA type-1 domain occupies 34-138; the sequence is DPVFAQKMMG…SVISPIIITN (105 aa). H71 and H86 together coordinate Zn(2+). The active-site Tele-phosphohistidine intermediate; for EIIA activity is H86. H86 bears the Phosphohistidine; by HPr mark.

As to quaternary structure, heterodimer with glycerol kinase (glpk). It depends on Zn(2+) as a cofactor.

It is found in the cytoplasm. Its function is as follows. The phosphoenolpyruvate-dependent sugar phosphotransferase system (sugar PTS), a major carbohydrate active transport system, catalyzes the phosphorylation of incoming sugar substrates concomitantly with their translocation across the cell membrane. The enzyme II complex composed of PtsG and Crr is involved in glucose transport. The chain is PTS system glucose-specific EIIA component (crr) from Staphylococcus aureus (strain COL).